A 357-amino-acid polypeptide reads, in one-letter code: U3 small nucleolar ribonucleoprotein protein LCP5 (357 aa).

Residue Ser-2 is modified to N-acetylserine. Disordered regions lie at residues 146-211 and 301-357; these read STLV…YKPP and NKAE…QRRL. A compositionally biased stretch (acidic residues) spans 155–166; that stretch reads DDSEDDESSEDE. Polar residues predominate over residues 171–183; sequence PNTSGIINTNKKS. 2 stretches are compositionally biased toward basic and acidic residues: residues 187–196 and 348–357; these read RVEETAKQEN and SAWDRAQRRL.

The protein localises to the nucleus. The protein resides in the nucleolus. Component of the U3 small nucleolar ribonucleoprotein. Required for the early cleavages at sites A0, A1 and A2 of the pre-ribosomal RNA. Participates in ribosome biogenesis. In Saccharomyces cerevisiae (strain ATCC 204508 / S288c) (Baker's yeast), this protein is U3 small nucleolar ribonucleoprotein protein LCP5 (LCP5).